A 367-amino-acid polypeptide reads, in one-letter code: DNA replication and repair protein RecF (367 aa).

30–37 lines the ATP pocket; that stretch reads GANGSGKT.

The protein belongs to the RecF family.

Its subcellular location is the cytoplasm. The RecF protein is involved in DNA metabolism; it is required for DNA replication and normal SOS inducibility. RecF binds preferentially to single-stranded, linear DNA. It also seems to bind ATP. In Pseudomonas syringae pv. tomato (strain ATCC BAA-871 / DC3000), this protein is DNA replication and repair protein RecF.